The sequence spans 816 residues: Leucine--tRNA ligase (816 aa).

The 'HIGH' region signature appears at 40-51 (SYPSGAQLHAGH). Residues 576–580 (KMSKS) carry the 'KMSKS' region motif. Lys-579 serves as a coordination point for ATP.

This sequence belongs to the class-I aminoacyl-tRNA synthetase family.

The protein localises to the cytoplasm. The enzyme catalyses tRNA(Leu) + L-leucine + ATP = L-leucyl-tRNA(Leu) + AMP + diphosphate. The polypeptide is Leucine--tRNA ligase (Clostridium beijerinckii (strain ATCC 51743 / NCIMB 8052) (Clostridium acetobutylicum)).